Here is a 555-residue protein sequence, read N- to C-terminus: Sulfite reductase [ferredoxin] 2 (555 aa).

A disordered region spans residues 1 to 31; it reads MTTARPAKARNEGQWALGNREPLNPNEEMKQ. The 3'-(S-cysteinyl)-tyrosine (Tyr-Cys) cross-link spans 69-161; it reads YTQREQGYDG…AVGLRTTEAC (93 aa). Residues C417, C423, C463, and C467 each coordinate [4Fe-4S] cluster. Position 467 (C467) interacts with siroheme.

This sequence belongs to the nitrite and sulfite reductase 4Fe-4S domain family. Monomer. Siroheme is required as a cofactor. [4Fe-4S] cluster serves as cofactor.

The enzyme catalyses hydrogen sulfide + 6 oxidized [2Fe-2S]-[ferredoxin] + 3 H2O = sulfite + 6 reduced [2Fe-2S]-[ferredoxin] + 7 H(+). Catalyzes the reduction of sulfite to sulfide, a step in the biosynthesis of sulfur-containing amino acids and cofactors. The chain is Sulfite reductase [ferredoxin] 2 (sir2) from Mycolicibacterium paratuberculosis (strain ATCC BAA-968 / K-10) (Mycobacterium paratuberculosis).